The primary structure comprises 50 residues: Omwaprin-a (50 aa).

Residues 3 to 47 (RPKKPGLCPPRPQKPCVKECKNDDSCPGQQKCCNYGCKDECRDPI) form the WAP domain. Disulfide bonds link Cys-10–Cys-35, Cys-18–Cys-39, Cys-22–Cys-34, and Cys-28–Cys-43.

It belongs to the venom waprin family. In terms of tissue distribution, expressed by the venom gland.

The protein resides in the secreted. In terms of biological role, damages membranes of susceptible bacteria. Has antibacterial activity against the Gram-positive bacteria B.megaterium and S.warneri. After a 45-minute treatment with this protein, B.megaterium have no visible pili and are smooth. Has no antibacterial activity against the Gram-positive bacteria B.thuringiensis, S.aureus, S.clavuligerus and B.anthracis, or the Gram-negative bacteria E.coli and A.tumefaciens. Has no hemolytic activity. Does not inhibit the proteinases elastase and cathepsin G. Is not toxic to mice. The protein is Omwaprin-a of Oxyuranus microlepidotus (Inland taipan).